We begin with the raw amino-acid sequence, 219 residues long: tRNA (guanine-N(7)-)-methyltransferase (219 aa).

S-adenosyl-L-methionine-binding residues include Glu44, Asp69, Glu102, and Asn125. Positions 129 and 161 each coordinate substrate.

The protein belongs to the class I-like SAM-binding methyltransferase superfamily. TrmB family.

It catalyses the reaction guanosine(46) in tRNA + S-adenosyl-L-methionine = N(7)-methylguanosine(46) in tRNA + S-adenosyl-L-homocysteine. It functions in the pathway tRNA modification; N(7)-methylguanine-tRNA biosynthesis. Catalyzes the formation of N(7)-methylguanine at position 46 (m7G46) in tRNA. In Clostridium perfringens (strain 13 / Type A), this protein is tRNA (guanine-N(7)-)-methyltransferase.